Reading from the N-terminus, the 1693-residue chain is uncharacterized protein (1693 aa).

WD repeat units follow at residues 1008–1042 (HHEG…YLWS), 1053–1083 (GHQE…KLWQ), 1094–1124 (GHED…RIWN), 1135–1165 (GHAD…RLWD), 1176–1206 (GHTS…RLWD), 1217–1247 (GHQN…RVWS), 1258–1288 (GHDH…RLWT), 1299–1329 (GHQK…RQWD), 1340–1370 (GHSH…RLWT), 1381–1411 (DHQG…QLWN), 1422–1452 (GHQD…RVWN), 1463–1493 (HYEK…GIWE), 1504–1534 (GHEG…RIWD), 1545–1575 (GHQS…RLWD), 1586–1616 (GHQG…RLWD), and 1627–1657 (GHGN…KLWP).

This is an uncharacterized protein from Synechocystis sp. (strain ATCC 27184 / PCC 6803 / Kazusa).